Here is a 72-residue protein sequence, read N- to C-terminus: Large ribosomal subunit protein uL29 (72 aa).

It belongs to the universal ribosomal protein uL29 family.

This is Large ribosomal subunit protein uL29 from Prochlorococcus marinus subsp. pastoris (strain CCMP1986 / NIES-2087 / MED4).